A 270-amino-acid chain; its full sequence is uncharacterized protein (270 aa).

The next 10 helical transmembrane spans lie at 12–32, 35–55, 64–84, 88–108, 117–137, 138–158, 171–191, 194–214, 226–246, and 248–268; these read AAIV…RNVG, TLSV…PFCL, TLLG…AAIQ, VAMA…LSVL, TLLA…PYAE, LTFG…VFVL, ITFY…LMFG, GSWL…FVLF, APIL…FYFG, and TLTL…LIAW. EamA domains lie at 19–133 and 150–269; these read VLMG…LMLT and LSYA…IAWR.

The protein belongs to the EamA transporter family.

It is found in the cell membrane. This is an uncharacterized protein from Archaeoglobus fulgidus (strain ATCC 49558 / DSM 4304 / JCM 9628 / NBRC 100126 / VC-16).